Reading from the N-terminus, the 274-residue chain is Large ribosomal subunit protein uL2 (274 aa).

Disordered stretches follow at residues 37–60 (QHQK…GHKH) and 224–252 (AMNP…WGNL). Residues 50 to 60 (TTRHKGGGHKH) are compositionally biased toward basic residues. Over residues 229–246 (DHPHGGGEGRTGEGRHAV) the composition is skewed to basic and acidic residues.

Belongs to the universal ribosomal protein uL2 family. Part of the 50S ribosomal subunit. Forms a bridge to the 30S subunit in the 70S ribosome.

In terms of biological role, one of the primary rRNA binding proteins. Required for association of the 30S and 50S subunits to form the 70S ribosome, for tRNA binding and peptide bond formation. It has been suggested to have peptidyltransferase activity; this is somewhat controversial. Makes several contacts with the 16S rRNA in the 70S ribosome. The sequence is that of Large ribosomal subunit protein uL2 from Paracidovorax citrulli (strain AAC00-1) (Acidovorax citrulli).